The sequence spans 217 residues: Mitochondrial inner membrane protease ATP23 (217 aa).

Residues 1–21 (MATPTPRHQETPQETTERERC) are disordered. Residues 7 to 21 (RHQETPQETTERERC) are compositionally biased toward basic and acidic residues. A divalent metal cation is bound at residue His-118. Glu-119 is an active-site residue. A divalent metal cation is bound at residue His-122.

This sequence belongs to the peptidase M76 family.

It is found in the mitochondrion inner membrane. In terms of biological role, has a dual role in the assembly of mitochondrial ATPase. Acts as a protease that removes N-terminal residues of mitochondrial ATPase CF(0) subunit 6 at the intermembrane space side. Also involved in the correct assembly of the membrane-embedded ATPase CF(0) particle, probably mediating association of subunit 6 with the subunit 9 ring. The sequence is that of Mitochondrial inner membrane protease ATP23 (ATP23) from Mycosarcoma maydis (Corn smut fungus).